The chain runs to 850 residues: Mitochondrial escape protein 2 (850 aa).

The transit peptide at 1–44 (MLLVRTTSLNVSRMPVPCLARGIGILKGKYRLANLMNAQPSVRH) directs the protein to the mitochondrion. Positions 44–66 (HVSSEIQQKDQQAGESNTATDTG) are disordered. Topologically, residues 45-287 (VSSEIQQKDQ…VSNFFTNHTR (243 aa)) are mitochondrial matrix. Polar residues predominate over residues 47–64 (SEIQQKDQQAGESNTATD). The RRM domain maps to 198 to 272 (TTIVIKFQGP…TVLHIQYENI (75 aa)). Residues 288–308 (IAIPVLFALLSIFAVLVFDPI) form a helical membrane-spanning segment. The Mitochondrial intermembrane segment spans residues 309–850 (REFSIEQKIT…CEEEIKNLSK (542 aa)). The segment covering 607 to 621 (KGENVKEPESEKEIA) has biased composition (basic and acidic residues). The interval 607 to 633 (KGENVKEPESEKEIAENNDSDSEADTS) is disordered.

It belongs to the YME2 family.

The protein localises to the mitochondrion inner membrane. Functionally, plays a role in maintaining the mitochondrial genome and in controlling the mtDNA escape. Involved in the regulation of mtDNA nucleotide structure and number. May have a dispensable role in early maturation of pre-rRNA. The chain is Mitochondrial escape protein 2 (YME2) from Saccharomyces cerevisiae (strain YJM789) (Baker's yeast).